We begin with the raw amino-acid sequence, 362 residues long: Holliday junction branch migration complex subunit RuvB (362 aa).

A disordered region spans residues 1 to 27 (MANIEKTEFHVPAPVSAAGNQKSSLGN). The segment at 13–206 (APVSAAGNQK…FGFTAQMEFY (194 aa)) is large ATPase domain (RuvB-L). ATP contacts are provided by residues Leu-45, Arg-46, Gly-87, Lys-90, Thr-91, Thr-92, 153 to 155 (EDF), Arg-196, Tyr-206, and Arg-243. Thr-91 contributes to the Mg(2+) binding site. A small ATPAse domain (RuvB-S) region spans residues 207–277 (EVEDLTKVVV…AAQAALVVFD (71 aa)). The segment at 280–362 (EMGLDRLDRA…EPPEGIIGSL (83 aa)) is head domain (RuvB-H). 2 residues coordinate DNA: Arg-335 and Arg-340.

The protein belongs to the RuvB family. In terms of assembly, homohexamer. Forms an RuvA(8)-RuvB(12)-Holliday junction (HJ) complex. HJ DNA is sandwiched between 2 RuvA tetramers; dsDNA enters through RuvA and exits via RuvB. An RuvB hexamer assembles on each DNA strand where it exits the tetramer. Each RuvB hexamer is contacted by two RuvA subunits (via domain III) on 2 adjacent RuvB subunits; this complex drives branch migration. In the full resolvosome a probable DNA-RuvA(4)-RuvB(12)-RuvC(2) complex forms which resolves the HJ.

It is found in the cytoplasm. The catalysed reaction is ATP + H2O = ADP + phosphate + H(+). The RuvA-RuvB-RuvC complex processes Holliday junction (HJ) DNA during genetic recombination and DNA repair, while the RuvA-RuvB complex plays an important role in the rescue of blocked DNA replication forks via replication fork reversal (RFR). RuvA specifically binds to HJ cruciform DNA, conferring on it an open structure. The RuvB hexamer acts as an ATP-dependent pump, pulling dsDNA into and through the RuvAB complex. RuvB forms 2 homohexamers on either side of HJ DNA bound by 1 or 2 RuvA tetramers; 4 subunits per hexamer contact DNA at a time. Coordinated motions by a converter formed by DNA-disengaged RuvB subunits stimulates ATP hydrolysis and nucleotide exchange. Immobilization of the converter enables RuvB to convert the ATP-contained energy into a lever motion, pulling 2 nucleotides of DNA out of the RuvA tetramer per ATP hydrolyzed, thus driving DNA branch migration. The RuvB motors rotate together with the DNA substrate, which together with the progressing nucleotide cycle form the mechanistic basis for DNA recombination by continuous HJ branch migration. Branch migration allows RuvC to scan DNA until it finds its consensus sequence, where it cleaves and resolves cruciform DNA. This is Holliday junction branch migration complex subunit RuvB from Corynebacterium diphtheriae (strain ATCC 700971 / NCTC 13129 / Biotype gravis).